A 426-amino-acid polypeptide reads, in one-letter code: MWLLLVCVVVGGFYTAWNIGANDVANAVGPSVGAGALTLKQAVLIAAVFEFLGAVLLGDRVIGTIESGLVAPSGHVLSSQDYVFGMTAALLATGVWLQIASFCGWPVSTTHAIVGAVLGFGIILKEDAVIYWNSCGRVFVSWLASPIIGGYFAFLIFSFIRKAILYKKDPVSAMVRIAPFLSAIIIFALGLVLILSGAVAPVISFSPALRIVCGLSLFAFFFTIWGIRFFKLAILPQEVLPGTLLDRLLSKSTDYGRKYLIVERIFAYLQMIIACFMSFAHGSNDVANAIAPVAGIYRTLYPQSYSSKVLLVFMSLGGLGLVCGLATWGWRVIDTIGKKITELTPSRGFSVGMSSAITIAAASSLGFPISTTHVVVGSVLGIGFARGLRAINLRIIKDIVLSWFITVPAGAALSIVFFLLLRALFC.

11 helical membrane-spanning segments follow: residues 1-21 (MWLLLVCVVVGGFYTAWNIGA), 37-57 (LTLKQAVLIAAVFEFLGAVLL), 83-103 (VFGMTAALLATGVWLQIASFC), 104-124 (GWPVSTTHAIVGAVLGFGIIL), 140-160 (VSWLASPIIGGYFAFLIFSFI), 183-203 (AIIIFALGLVLILSGAVAPVI), 207-227 (PALRIVCGLSLFAFFFTIWGI), 260-280 (LIVERIFAYLQMIIACFMSFA), 309-329 (VLLVFMSLGGLGLVCGLATWG), 365-385 (LGFPISTTHVVVGSVLGIGFA), and 399-419 (IVLSWFITVPAGAALSIVFFL).

The protein belongs to the inorganic phosphate transporter (PiT) (TC 2.A.20) family.

The protein resides in the cell membrane. Its function is as follows. Potential transporter for phosphate. The protein is Putative phosphate permease CT_962 of Chlamydia trachomatis serovar D (strain ATCC VR-885 / DSM 19411 / UW-3/Cx).